The sequence spans 519 residues: Anthranilate synthase component 1 (519 aa).

L-tryptophan is bound by residues S39 and 290 to 292 (PYM). 327-328 (GT) lines the chorismate pocket. E360 contributes to the Mg(2+) binding site. Chorismate-binding positions include Y448, R468, 482–484 (GAG), and G484. E497 contacts Mg(2+).

It belongs to the anthranilate synthase component I family. As to quaternary structure, heterotetramer consisting of two non-identical subunits: a beta subunit (TrpG) and a large alpha subunit (TrpE). It depends on Mg(2+) as a cofactor.

The enzyme catalyses chorismate + L-glutamine = anthranilate + pyruvate + L-glutamate + H(+). It functions in the pathway amino-acid biosynthesis; L-tryptophan biosynthesis; L-tryptophan from chorismate: step 1/5. Feedback inhibited by tryptophan. Part of a heterotetrameric complex that catalyzes the two-step biosynthesis of anthranilate, an intermediate in the biosynthesis of L-tryptophan. In the first step, the glutamine-binding beta subunit (TrpG) of anthranilate synthase (AS) provides the glutamine amidotransferase activity which generates ammonia as a substrate that, along with chorismate, is used in the second step, catalyzed by the large alpha subunit of AS (TrpE) to produce anthranilate. In the absence of TrpG, TrpE can synthesize anthranilate directly from chorismate and high concentrations of ammonia. This is Anthranilate synthase component 1 (trpE) from Serratia marcescens.